Consider the following 101-residue polypeptide: NAD(P)H-quinone oxidoreductase subunit 4L, chloroplastic (101 aa).

The next 3 helical transmembrane spans lie at Met2 to Ile22, Met32 to Phe52, and Ile61 to Val81.

It belongs to the complex I subunit 4L family. NDH is composed of at least 16 different subunits, 5 of which are encoded in the nucleus.

It localises to the plastid. Its subcellular location is the chloroplast thylakoid membrane. It carries out the reaction a plastoquinone + NADH + (n+1) H(+)(in) = a plastoquinol + NAD(+) + n H(+)(out). The catalysed reaction is a plastoquinone + NADPH + (n+1) H(+)(in) = a plastoquinol + NADP(+) + n H(+)(out). NDH shuttles electrons from NAD(P)H:plastoquinone, via FMN and iron-sulfur (Fe-S) centers, to quinones in the photosynthetic chain and possibly in a chloroplast respiratory chain. The immediate electron acceptor for the enzyme in this species is believed to be plastoquinone. Couples the redox reaction to proton translocation, and thus conserves the redox energy in a proton gradient. In Daucus carota (Wild carrot), this protein is NAD(P)H-quinone oxidoreductase subunit 4L, chloroplastic.